The chain runs to 696 residues: MNKIRKTFQYGKHEVTFETGEMARQATGAVVVRMGDTVLLVSVVAKKEAEEGRDFFPLTVNYQEKTYAAGKIPGGYFKREGRPTEKETLTSRLIDRPLRPLFPKGFTNEVQVIATVLSVDSKVPTDIPAILGASAAIGLSGIPFNGSLGAARVGYRGGEYLLNPSLDELKDSALDLVVAGTRDAVLMVESEAQELPESVMLGAVLHGHQAMQVAIQAIAEFIQEAGGAKWEWEPPTVNTALEKWVVEKSEAPLKKAYQIQEKTARQAQIQAIRDQLLADRAAEREGEENAVNEHELAVIFHELERRIVREQILTGQPRIDGRDTKTVRPITVKVGVLPRSHGSALFTRGETQALVVTTLGTERDAQSIDDLDGDRQEEFIFHYNFPPFCVGEVGFMSGPKRREIGHGRLAKRAVVPVVPTLDKFPYVIRVVSEILESNGSSSMASVCGSSLALMDAGVPTKAPVAGIAMGLIKENDKYAVLSDILGDEDHLGDMDFKVAGTSNGVTALQMDIKIEGITKEIMEQALDQAKEGRLHILSIMNKVLDKPRSQVSDLAPQYVTMKINPEKIRDVIGKGGVVIREITEATNCAIDISDDGTIKIAAHTTEEGEAAKRRIEELTAEVELGKVYEGTVVKITDFGAFVQILPNTQGLVHISQIAQERVENVRDYLEEGQVIRVKVIEIDRQGRVRLSMKQID.

Asp489 and Asp495 together coordinate Mg(2+). Residues 556 to 615 enclose the KH domain; it reads PQYVTMKINPEKIRDVIGKGGVVIREITEATNCAIDISDDGTIKIAAHTTEEGEAAKRRI. Residues 625-693 enclose the S1 motif domain; the sequence is GKVYEGTVVK…RQGRVRLSMK (69 aa).

It belongs to the polyribonucleotide nucleotidyltransferase family. As to quaternary structure, component of the RNA degradosome, which is a multiprotein complex involved in RNA processing and mRNA degradation. The cofactor is Mg(2+).

It localises to the cytoplasm. It carries out the reaction RNA(n+1) + phosphate = RNA(n) + a ribonucleoside 5'-diphosphate. Functionally, involved in mRNA degradation. Catalyzes the phosphorolysis of single-stranded polyribonucleotides processively in the 3'- to 5'-direction. This Coxiella burnetii (strain RSA 331 / Henzerling II) protein is Polyribonucleotide nucleotidyltransferase.